The primary structure comprises 420 residues: MVSRQEQFEQVQAVKKSINTASEEVKNQALLAMADHLVAATEEILAANALDMAAAKGKISDVMLDRLYLDADRIEAMARGIREVVALPDPIGEVLETSQLENGLVITKKRVAMGVIGIIYESRPNVTSDAAALTLKSGNAVVLRSGKDAYQTTHAIVTALKKGLETTTIHPNVIQLVEDTSRESSYAMMKAKGYLDLLIPRGGAGLINAVVENAIVPVIETGTGIVHVYVDKDADEDKALSIINNAKTSRPSVCNAMEVLLVHENKAASFLPRLEQVLVAERKEAGLEPIQFRLDSKASQFVSGQAAETQDFDTEFLDYVLAVKVVSSLEEAVAHIESHSTHHSDAIVTENAEAAAYFTDQVDSAAVYVNASTRFTDGGQFGLGCEMGISTQKLHARGPMGLKELTSYKYVVAGDGQIRE.

Belongs to the gamma-glutamyl phosphate reductase family.

Its subcellular location is the cytoplasm. The enzyme catalyses L-glutamate 5-semialdehyde + phosphate + NADP(+) = L-glutamyl 5-phosphate + NADPH + H(+). Its pathway is amino-acid biosynthesis; L-proline biosynthesis; L-glutamate 5-semialdehyde from L-glutamate: step 2/2. In terms of biological role, catalyzes the NADPH-dependent reduction of L-glutamate 5-phosphate into L-glutamate 5-semialdehyde and phosphate. The product spontaneously undergoes cyclization to form 1-pyrroline-5-carboxylate. In Streptococcus pneumoniae serotype 4 (strain ATCC BAA-334 / TIGR4), this protein is Gamma-glutamyl phosphate reductase.